Here is a 244-residue protein sequence, read N- to C-terminus: MDIVVIRDDIYPIFNNEDKIVLLLGNHQEFISNFISKINIHALFYCKYSIIPDEIGTLNVSIIESSHKIRGRYINVEEFISLLYPIQLCSKYTYKNDIDHDTMFIHDIIFFNNTWVRILFIEFLGIIDKQYETCIINPYLVKDNYKIFKNILLASIINNIIFDKNSTLIELINKLYTRYHIDKYIMTCIVKYNDYNNIKLIYHCYNRNKFNAFIYAWFRSQITCDSIEENEKVERMFNNISKRI.

It belongs to the chordopoxvirinae D3 family.

The protein resides in the virion. In terms of biological role, late protein which is part of a large complex required for early virion morphogenesis. This complex participates in the formation of virosomes and the incorporation of virosomal contents into nascent immature virions. The protein is 27 kDa core protein of Swinepox virus (strain Swine/Nebraska/17077-99/1999) (SWPV).